A 187-amino-acid polypeptide reads, in one-letter code: MSLINTKIKPFKNQAFKNGEFIEITEKDTEGRWSVFFFYPADFTFVCPTELGDVADHYEELQKLGVDVYAVSTDTHFTHKAWHSSSETIAKIKYAMIGDPTGALTRNFDNMREDEGLADRATFVVDPQGIIQAIEVTAEGIGRDASDLLRKIKAAQYVASHPGEVCPAKWKEGEATLAPSLDLVGKI.

A Thioredoxin domain is found at 2-157; that stretch reads SLINTKIKPF…LLRKIKAAQY (156 aa). K17 bears the N6-acetyllysine mark. The active-site Cysteine sulfenic acid (-SOH) intermediate is the C47. N6-acetyllysine occurs at positions 93, 153, 169, and 171.

This sequence belongs to the peroxiredoxin family. AhpC/Prx1 subfamily. Homodimer; disulfide-linked, upon oxidation. 5 homodimers assemble to form a ring-like decamer.

The protein resides in the cytoplasm. The enzyme catalyses a hydroperoxide + NADH + H(+) = an alcohol + NAD(+) + H2O. In terms of biological role, thiol-specific peroxidase that catalyzes the reduction of hydrogen peroxide and organic hydroperoxides to water and alcohols, respectively. Plays a role in cell protection against oxidative stress by detoxifying peroxides. This Shigella flexneri protein is Alkyl hydroperoxide reductase C (ahpC).